The following is a 628-amino-acid chain: tRNA 5-methylaminomethyl-2-thiouridine biosynthesis bifunctional protein MnmC (628 aa).

The tract at residues 1 to 237 (MSSYSPLVPP…KWHMTVGVRE (237 aa)) is tRNA (mnm(5)s(2)U34)-methyltransferase. The FAD-dependent cmnm(5)s(2)U34 oxidoreductase stretch occupies residues 265-628 (VGGGLAGAGI…ADLLAAVAPR (364 aa)).

It in the N-terminal section; belongs to the methyltransferase superfamily. tRNA (mnm(5)s(2)U34)-methyltransferase family. In the C-terminal section; belongs to the DAO family. The cofactor is FAD.

The protein localises to the cytoplasm. It carries out the reaction 5-aminomethyl-2-thiouridine(34) in tRNA + S-adenosyl-L-methionine = 5-methylaminomethyl-2-thiouridine(34) in tRNA + S-adenosyl-L-homocysteine + H(+). Its function is as follows. Catalyzes the last two steps in the biosynthesis of 5-methylaminomethyl-2-thiouridine (mnm(5)s(2)U) at the wobble position (U34) in tRNA. Catalyzes the FAD-dependent demodification of cmnm(5)s(2)U34 to nm(5)s(2)U34, followed by the transfer of a methyl group from S-adenosyl-L-methionine to nm(5)s(2)U34, to form mnm(5)s(2)U34. This chain is tRNA 5-methylaminomethyl-2-thiouridine biosynthesis bifunctional protein MnmC, found in Bordetella petrii (strain ATCC BAA-461 / DSM 12804 / CCUG 43448).